Here is a 320-residue protein sequence, read N- to C-terminus: Probable protein adenylyltransferase aq_aa38 (320 aa).

Residues 76–206 enclose the Fido domain; it reads VSEALILWIY…AIVVVEKLSR (131 aa). Residues 100–101, 157–159, and R163 each bind ATP; these read KS and GNG.

The protein belongs to the fic family.

It catalyses the reaction L-tyrosyl-[protein] + ATP = O-(5'-adenylyl)-L-tyrosyl-[protein] + diphosphate. The catalysed reaction is L-threonyl-[protein] + ATP = 3-O-(5'-adenylyl)-L-threonyl-[protein] + diphosphate. Its function is as follows. Probable adenylyltransferase that mediates the addition of adenosine 5'-monophosphate (AMP) to specific residues of target proteins. The sequence is that of Probable protein adenylyltransferase aq_aa38 from Aquifex aeolicus (strain VF5).